The sequence spans 277 residues: MNKNSQQKAAHVTTRRLYDMKQNGEKISVLTAYDYTMARILDRAGIDVILVGDSASNVFSGHNTTLPITVDELIYHAKGVVRGVQAETSRAMVVVDMPFMSYQLSPEDALRNAGKIMKEHECDAVKMEGGRTIADTVRRITDAGIPVMGHLGLMPQSIYKYGSYKVRAEDPAEAEELLEDAVTLERSGAFAVVLEKIPAGLAAEISRLLSIPTIGIGAGAECDGQVLVVNDILGLNREFHPRFVRQYADLNTVIEQAVRQYVEDVRSGGFPSVDESY.

2 residues coordinate Mg(2+): Asp53 and Asp96. 3-methyl-2-oxobutanoate-binding positions include 53 to 54 (DS), Asp96, and Lys126. Residue Glu128 coordinates Mg(2+). Glu195 functions as the Proton acceptor in the catalytic mechanism.

Belongs to the PanB family. As to quaternary structure, homodecamer; pentamer of dimers. It depends on Mg(2+) as a cofactor.

Its subcellular location is the cytoplasm. It catalyses the reaction 3-methyl-2-oxobutanoate + (6R)-5,10-methylene-5,6,7,8-tetrahydrofolate + H2O = 2-dehydropantoate + (6S)-5,6,7,8-tetrahydrofolate. Its pathway is cofactor biosynthesis; (R)-pantothenate biosynthesis; (R)-pantoate from 3-methyl-2-oxobutanoate: step 1/2. Its function is as follows. Catalyzes the reversible reaction in which hydroxymethyl group from 5,10-methylenetetrahydrofolate is transferred onto alpha-ketoisovalerate to form ketopantoate. The polypeptide is 3-methyl-2-oxobutanoate hydroxymethyltransferase (Chlorobium luteolum (strain DSM 273 / BCRC 81028 / 2530) (Pelodictyon luteolum)).